Here is a 417-residue protein sequence, read N- to C-terminus: Equilibrative nucleotide transporter 2 (417 aa).

Transmembrane regions (helical) follow at residues 20–40, 52–72, 85–105, 109–129, 144–164, 185–205, 265–285, 292–312, 328–348, 354–374, and 393–413; these read AVCWLLGVGCLLAWNSMLTIV, PSRILTIIYQSFSIGALSVLV, LFGYSLFSLGSLAVLVLNLAT, GGIGSFIGVCVISAAFGLADA, PEFLQSFLAGLAASGALTSGL, LFFAMSASFELVCVLLYAYVF, LAVTLFLVYLLTFSIFPGFLS, SLGDWYALVLIAVFNVSDLVG, CLLITSLGRLLLIPAFNITGI, WMIFLMSVLGLSNGYLTVCVI, and LVLYICGGMFAGVACDWLWLV.

This sequence belongs to the SLC29A/ENT transporter (TC 2.A.57) family. In terms of tissue distribution, expressed in leaves and flowers.

The protein resides in the cell membrane. In terms of biological role, may be involved in nucleoside transport. This Arabidopsis thaliana (Mouse-ear cress) protein is Equilibrative nucleotide transporter 2 (ENT2).